The following is a 207-amino-acid chain: Thiamine-phosphate synthase (207 aa).

4-amino-2-methyl-5-(diphosphooxymethyl)pyrimidine contacts are provided by residues 35–39 (QYRDK) and Asn-67. Residues Asp-68 and Asp-86 each contribute to the Mg(2+) site. Thr-105 contributes to the 4-amino-2-methyl-5-(diphosphooxymethyl)pyrimidine binding site. 132 to 134 (SVT) is a 2-[(2R,5Z)-2-carboxy-4-methylthiazol-5(2H)-ylidene]ethyl phosphate binding site. Residue Lys-135 participates in 4-amino-2-methyl-5-(diphosphooxymethyl)pyrimidine binding. Gly-162 is a 2-[(2R,5Z)-2-carboxy-4-methylthiazol-5(2H)-ylidene]ethyl phosphate binding site.

The protein belongs to the thiamine-phosphate synthase family. It depends on Mg(2+) as a cofactor.

It catalyses the reaction 2-[(2R,5Z)-2-carboxy-4-methylthiazol-5(2H)-ylidene]ethyl phosphate + 4-amino-2-methyl-5-(diphosphooxymethyl)pyrimidine + 2 H(+) = thiamine phosphate + CO2 + diphosphate. It carries out the reaction 2-(2-carboxy-4-methylthiazol-5-yl)ethyl phosphate + 4-amino-2-methyl-5-(diphosphooxymethyl)pyrimidine + 2 H(+) = thiamine phosphate + CO2 + diphosphate. The catalysed reaction is 4-methyl-5-(2-phosphooxyethyl)-thiazole + 4-amino-2-methyl-5-(diphosphooxymethyl)pyrimidine + H(+) = thiamine phosphate + diphosphate. It functions in the pathway cofactor biosynthesis; thiamine diphosphate biosynthesis; thiamine phosphate from 4-amino-2-methyl-5-diphosphomethylpyrimidine and 4-methyl-5-(2-phosphoethyl)-thiazole: step 1/1. In terms of biological role, condenses 4-methyl-5-(beta-hydroxyethyl)thiazole monophosphate (THZ-P) and 2-methyl-4-amino-5-hydroxymethyl pyrimidine pyrophosphate (HMP-PP) to form thiamine monophosphate (TMP). This Pseudomonas putida (strain GB-1) protein is Thiamine-phosphate synthase.